The chain runs to 189 residues: Nucleoside triphosphate pyrophosphatase (189 aa).

Asp-70 serves as the catalytic Proton acceptor.

It belongs to the Maf family. A divalent metal cation is required as a cofactor.

It is found in the cytoplasm. It carries out the reaction a ribonucleoside 5'-triphosphate + H2O = a ribonucleoside 5'-phosphate + diphosphate + H(+). The enzyme catalyses a 2'-deoxyribonucleoside 5'-triphosphate + H2O = a 2'-deoxyribonucleoside 5'-phosphate + diphosphate + H(+). Nucleoside triphosphate pyrophosphatase. May have a dual role in cell division arrest and in preventing the incorporation of modified nucleotides into cellular nucleic acids. The chain is Nucleoside triphosphate pyrophosphatase from Xylella fastidiosa (strain M23).